A 680-amino-acid chain; its full sequence is DNA-directed RNA polymerase subunit beta' (680 aa).

Positions 69, 71, 87, and 90 each coordinate Zn(2+). Residues Asp-489, Asp-491, and Asp-493 each contribute to the Mg(2+) site.

The protein belongs to the RNA polymerase beta' chain family. RpoC1 subfamily. In terms of assembly, in plastids the minimal PEP RNA polymerase catalytic core is composed of four subunits: alpha, beta, beta', and beta''. When a (nuclear-encoded) sigma factor is associated with the core the holoenzyme is formed, which can initiate transcription. Requires Mg(2+) as cofactor. It depends on Zn(2+) as a cofactor.

The protein localises to the plastid. Its subcellular location is the chloroplast. The enzyme catalyses RNA(n) + a ribonucleoside 5'-triphosphate = RNA(n+1) + diphosphate. DNA-dependent RNA polymerase catalyzes the transcription of DNA into RNA using the four ribonucleoside triphosphates as substrates. In Nasturtium officinale (Watercress), this protein is DNA-directed RNA polymerase subunit beta'.